We begin with the raw amino-acid sequence, 292 residues long: 4-hydroxy-tetrahydrodipicolinate synthase (292 aa).

Residue Thr-44 coordinates pyruvate. Tyr-132 serves as the catalytic Proton donor/acceptor. Lys-161 acts as the Schiff-base intermediate with substrate in catalysis. Ile-203 is a pyruvate binding site.

This sequence belongs to the DapA family. As to quaternary structure, homotetramer; dimer of dimers.

It is found in the cytoplasm. The catalysed reaction is L-aspartate 4-semialdehyde + pyruvate = (2S,4S)-4-hydroxy-2,3,4,5-tetrahydrodipicolinate + H2O + H(+). Its pathway is amino-acid biosynthesis; L-lysine biosynthesis via DAP pathway; (S)-tetrahydrodipicolinate from L-aspartate: step 3/4. Catalyzes the condensation of (S)-aspartate-beta-semialdehyde [(S)-ASA] and pyruvate to 4-hydroxy-tetrahydrodipicolinate (HTPA). The chain is 4-hydroxy-tetrahydrodipicolinate synthase from Fervidobacterium nodosum (strain ATCC 35602 / DSM 5306 / Rt17-B1).